We begin with the raw amino-acid sequence, 356 residues long: Cyanide hydratase (356 aa).

The CN hydrolase domain maps to 15–290 (FKVAAVQAEP…EVVLYANISL (276 aa)). Glu-55 serves as the catalytic Proton acceptor. Residue Lys-137 is part of the active site. Residue Cys-172 is the Nucleophile of the active site. The tract at residues 331–356 (DEQAASKAQQAEIDNAGKGSIVPSKL) is disordered.

It belongs to the carbon-nitrogen hydrolase superfamily. Nitrilase family.

The catalysed reaction is formamide = hydrogen cyanide + H2O. Functionally, catalyzes the hydration of cyanide to formamide. Degradation of cyanide may be important for plant pathogenic fungi in infection of cyanogenic plants. The polypeptide is Cyanide hydratase (Armillaria gallica (Bulbous honey fungus)).